The sequence spans 1096 residues: uncharacterized protein (1096 aa).

Belongs to the IIV-6 261R/396L/443R family.

This is an uncharacterized protein from Invertebrate iridescent virus 3 (IIV-3).